A 112-amino-acid chain; its full sequence is MKIVMAIIKPFKLDEVREALTAIGIQGLTVTEVKGYGRQKGHTEIYRGTEYAVSFLPKLKIEIAVASELVDRAVEAIAASAKTGQIGDGKIFVYSIDHAVRIRTGETDSEAL.

Tyrosine 51 carries the post-translational modification O-UMP-tyrosine.

Belongs to the P(II) protein family. In terms of assembly, homotrimer.

Functionally, in nitrogen-limiting conditions, when the ratio of Gln to 2-ketoglutarate decreases, P-II is uridylylated to P-II-UMP. P-II-UMP allows the deadenylation of glutamine synthetase (GS), thus activating the enzyme. Conversely, in nitrogen excess P-II is deuridylated and promotes the adenylation of GS. P-II indirectly controls the transcription of the GS gene (glnA). P-II prevents NR-II-catalyzed conversion of NR-I to NR-I-phosphate, the transcriptional activator of glnA. When P-II is uridylylated to P-II-UMP, these events are reversed. The protein is Nitrogen regulatory protein P-II (glnB) of Rhizobium etli (strain ATCC 51251 / DSM 11541 / JCM 21823 / NBRC 15573 / CFN 42).